The following is a 78-amino-acid chain: Defensin-like protein 149 (78 aa).

Positions 1–25 (MMKKLIQLSFTVMIIFTILVLGVVA) are cleaved as a signal peptide. Cystine bridges form between Cys-36/Cys-77, Cys-45/Cys-65, Cys-50/Cys-71, and Cys-54/Cys-73.

This sequence belongs to the DEFL family.

The protein localises to the secreted. This Arabidopsis thaliana (Mouse-ear cress) protein is Defensin-like protein 149 (LCR5).